The following is a 1097-amino-acid chain: Protein STICHEL-like 3 (1097 aa).

Disordered regions lie at residues 1–22, 74–168, 220–293, 321–358, and 400–436; these read MTTTTTTTTRVASSSSTRNNRI, SLRD…YRIG, NVRP…GFGE, GRSLSCGMSDSKGGRKGETNERNGSDKMMIQSDDDSSS, and DSDLASEGRSGEKKHKKKSHVNARHRHRQQHQSLTEK. Residues 10–20 are compositionally biased toward polar residues; that stretch reads RVASSSSTRNN. Basic and acidic residues predominate over residues 95–113; sequence LPKKGDLVEGGRRSVDLKK. Residues 126–136 are compositionally biased toward polar residues; sequence PVVNFGTSKVT. The span at 137 to 168 shows a compositional bias: basic and acidic residues; it reads PSDERSGPVSGERDSGRRVKREESSRKSYRIG. Gly residues predominate over residues 227–241; it reads YGGGGGGGNTRGCAG. Residues 245 to 259 show a composition bias toward basic residues; that stretch reads RPKRRKFRGTRRVRG. Basic and acidic residues-rich tracts occupy residues 281-291 and 332-345; these read VEKHDGEKEGF and KGGRKGETNERNGS. Over residues 346–358 the composition is skewed to low complexity; that stretch reads DKMMIQSDDDSSS. The span at 411–429 shows a compositional bias: basic residues; that stretch reads EKKHKKKSHVNARHRHRQQ. 472-479 contributes to the ATP binding site; the sequence is GPNGTGKT. Residues cysteine 491, cysteine 500, cysteine 503, and cysteine 506 each contribute to the Zn(2+) site. A coiled-coil region spans residues 742–770; it reads KEDMEKLRQALKTLSEAEKQLRVSNDKLT. Disordered stretches follow at residues 790-828, 913-932, and 956-1003; these read SSTADTGGRESSDHHLDPSSDAAGGRSSGLDRRRGDSRK, DPRNNVHHHHHHPTVKDKSL, and VTES…SQSI. Composition is skewed to basic and acidic residues over residues 796 to 807 and 818 to 828; these read GGRESSDHHLDP and GLDRRRGDSRK. Residues 993–1003 are compositionally biased toward polar residues; it reads ASQSQNQSQSI.

It belongs to the DnaX/STICHEL family.

In Arabidopsis thaliana (Mouse-ear cress), this protein is Protein STICHEL-like 3.